We begin with the raw amino-acid sequence, 107 residues long: High mobility group protein HMG-I/HMG-Y (107 aa).

Over residues 1 to 13 (MSESGSKSSQPLA) the composition is skewed to polar residues. The segment at 1–107 (MSESGSKSSQ…ISQESSEEEQ (107 aa)) is disordered. An N-acetylserine modification is found at S2. Position 7 is an N6-acetyllysine (K7). S8 carries the post-translational modification ADP-ribosylserine. Residue S9 is modified to ADP-ribosylserine; alternate. S9 bears the Phosphoserine; alternate mark. Residue K15 is modified to N6-acetyllysine; alternate. A Glycyl lysine isopeptide (Lys-Gly) (interchain with G-Cter in SUMO2); alternate cross-link involves residue K15. Positions 15-24 (KQEKDGTEKR) are enriched in basic and acidic residues. Positions 21-31 (TEKRGRGRPRK) form a DNA-binding region, a.T hook 1. Position 26 is an asymmetric dimethylarginine; alternate (R26). R26 bears the Omega-N-methylarginine; alternate mark. R26 is modified (symmetric dimethylarginine; alternate). Residue S36 is modified to Phosphoserine; by HIPK2 and CDC2. The residue at position 39 (T39) is a Phosphothreonine. Phosphoserine occurs at positions 44 and 49. At T53 the chain carries Phosphothreonine; by HIPK2 and CDC2. 2 consecutive DNA-binding regions (a.T hook) follow at residues 53 to 63 (TPKRPRGRPKG) and 78 to 89 (APGRKPRGRPKK). The segment at 53-77 (TPKRPRGRPKGSKNKGAAKTRKVTT) is interaction with HIPK2. The segment covering 55 to 74 (KRPRGRPKGSKNKGAAKTRK) has biased composition (basic residues). Asymmetric dimethylarginine; by PRMT6; alternate occurs at positions 58 and 60. Omega-N-methylarginine; by PRMT6; alternate occurs at positions 58 and 60. Over residues 93 to 107 (EEEEGISQESSEEEQ) the composition is skewed to acidic residues. Residues S99, S102, and S103 each carry the phosphoserine modification.

Belongs to the HMGA family. Interacts with HIPK2. Isoforms HMG-I and HMG-Y can be phosphorylated by HIPK2. Phosphorylation may modulate DNA-binding affinity. Post-translationally, methylation at Arg-58 is mutually exclusive with methylation at Arg-60.

The protein localises to the nucleus. It localises to the chromosome. Functionally, HMG-I/Y bind preferentially to the minor groove of A+T rich regions in double-stranded DNA. It is suggested that these proteins could function in nucleosome phasing and in the 3'-end processing of mRNA transcripts. They are also involved in the transcription regulation of genes containing, or in close proximity to A+T-rich regions. This Mus musculus (Mouse) protein is High mobility group protein HMG-I/HMG-Y (Hmga1).